Here is a 34-residue protein sequence, read N- to C-terminus: Corticostatin-6 (34 aa).

Cystine bridges form between cysteine 3/cysteine 31, cysteine 5/cysteine 20, and cysteine 10/cysteine 30.

The protein belongs to the alpha-defensin family. As to expression, lung, spleen, small intestine, pituitary gland, adrenal medulla and plasma.

It is found in the secreted. In terms of biological role, microbicidal activity and inhibits corticotropin (ACTH) stimulated corticosterone production. The chain is Corticostatin-6 from Oryctolagus cuniculus (Rabbit).